Reading from the N-terminus, the 144-residue chain is Prefoldin subunit alpha (144 aa).

This sequence belongs to the prefoldin alpha subunit family. Heterohexamer of two alpha and four beta subunits.

It is found in the cytoplasm. Molecular chaperone capable of stabilizing a range of proteins. Seems to fulfill an ATP-independent, HSP70-like function in archaeal de novo protein folding. The sequence is that of Prefoldin subunit alpha from Methanococcus maripaludis (strain C7 / ATCC BAA-1331).